The following is a 267-amino-acid chain: Glutamate racemase (267 aa).

Residues D13–S14 and Y45–G46 each bind substrate. The active-site Proton donor/acceptor is the C77. N78–T79 contacts substrate. The active-site Proton donor/acceptor is the C192. Position 193 to 194 (T193 to H194) interacts with substrate.

The protein belongs to the aspartate/glutamate racemases family.

The catalysed reaction is L-glutamate = D-glutamate. Its pathway is cell wall biogenesis; peptidoglycan biosynthesis. Functionally, provides the (R)-glutamate required for cell wall biosynthesis. The polypeptide is Glutamate racemase (Sinorhizobium fredii (strain NBRC 101917 / NGR234)).